The following is a 262-amino-acid chain: Matrix protein (262 aa).

A disordered region spans residues 219–243 (PSPAEGKIGRIKRPTERKEDTPSMT).

This sequence belongs to the nucleorhabdovirus type-1 matrix protein family. As to quaternary structure, homomultimer. Interacts with nucleoprotein and with the cytoplasmic domain of glycoprotein.

Its subcellular location is the virion membrane. It localises to the host endomembrane system. In terms of biological role, plays a major role in assembly and budding of virion. Completely covers the ribonucleoprotein coil and keep it in condensed bullet-shaped form. Inhibits viral transcription and stimulates replication. In Rice yellow stunt virus (RYSV), this protein is Matrix protein (M).